Here is a 473-residue protein sequence, read N- to C-terminus: Cell division protein FtsP (473 aa).

The tat-type signal signal peptide spans 1-27 (MSFSRRQFIQVSGLAMCIGAAPLLVRA).

It belongs to the FtsP family. In terms of processing, predicted to be exported by the Tat system. The position of the signal peptide cleavage has not been experimentally proven.

The protein resides in the periplasm. Its function is as follows. Cell division protein that is required for growth during stress conditions. May be involved in protecting or stabilizing the divisomal assembly under conditions of stress. This Photorhabdus laumondii subsp. laumondii (strain DSM 15139 / CIP 105565 / TT01) (Photorhabdus luminescens subsp. laumondii) protein is Cell division protein FtsP.